The following is an 82-amino-acid chain: Small ribosomal subunit protein bS16 (82 aa).

Belongs to the bacterial ribosomal protein bS16 family.

The sequence is that of Small ribosomal subunit protein bS16 from Francisella philomiragia subsp. philomiragia (strain ATCC 25017 / CCUG 19701 / FSC 153 / O#319-036).